The sequence spans 769 residues: Glutathione biosynthesis bifunctional protein GshAB (769 aa).

The tract at residues 1-347 (MLDSFKENEA…QLADENENNI (347 aa)) is glutamate--cysteine ligase. One can recognise an ATP-grasp domain in the interval 514 to 768 (KLVLAEHGIR…IGDKILDFLF (255 aa)). 541-599 (SLFEDKQIVVKPKSTNYGWGISIFKNKFTLEDYQEALNIAFSYDSSVIIEEFIPGDEFR) contributes to the ATP binding site. The Mg(2+) site is built by Asp721, Glu738, and Asn740. Mn(2+)-binding residues include Asp721, Glu738, and Asn740.

The protein in the N-terminal section; belongs to the glutamate--cysteine ligase type 1 family. Type 2 subfamily. As to quaternary structure, monomer. The cofactor is Mg(2+). Requires Mn(2+) as cofactor.

It catalyses the reaction L-cysteine + L-glutamate + ATP = gamma-L-glutamyl-L-cysteine + ADP + phosphate + H(+). It carries out the reaction gamma-L-glutamyl-L-cysteine + glycine + ATP = glutathione + ADP + phosphate + H(+). Its pathway is sulfur metabolism; glutathione biosynthesis; glutathione from L-cysteine and L-glutamate: step 1/2. It functions in the pathway sulfur metabolism; glutathione biosynthesis; glutathione from L-cysteine and L-glutamate: step 2/2. Synthesizes glutathione from L-glutamate and L-cysteine via gamma-L-glutamyl-L-cysteine. This is Glutathione biosynthesis bifunctional protein GshAB from Listeria innocua serovar 6a (strain ATCC BAA-680 / CLIP 11262).